The chain runs to 881 residues: DNA replication helicase (881 aa).

The disordered stretch occupies residues 1–32 (MESADILPGSRGTVDRRCEGSEEKITPPRPVE). Residues 13–32 (TVDRRCEGSEEKITPPRPVE) are compositionally biased toward basic and acidic residues. Residue 105–112 (GNAGSGKS) participates in ATP binding.

It belongs to the herpesviridae helicase family. In terms of assembly, associates with the primase and the primase-associated factor to form the helicase-primase complex.

It localises to the host nucleus. Its function is as follows. Component of the helicase/primase complex. Unwinds the DNA at the replication forks and generates single-stranded DNA for both leading and lagging strand synthesis. The primase synthesizes short RNA primers on the lagging strand that the polymerase elongates using dNTPs. Possesses helicase-like motifs and therefore may act as the helicase subunit of the complex. This chain is DNA replication helicase, found in Equus caballus (Horse).